Consider the following 168-residue polypeptide: Myelin basic protein (168 aa).

Alanine 1 carries the N-acetylalanine modification. A phosphoserine mark is found at serine 7 and serine 12. Position 14 is a phosphotyrosine (tyrosine 14). Residue threonine 17 is modified to Phosphothreonine. Serine 19 carries the post-translational modification Phosphoserine. Threonine 20 is subject to Phosphothreonine. Citrulline occurs at positions 25 and 31. Threonine 35 is subject to Phosphothreonine. Serine 40 carries the phosphoserine modification. Residues 42 to 84 (GRFFSSDRGAPKRGSGKDHAARTTHYGSLPQKSGHRPQDENPV) are disordered. Omega-N-methylarginine occurs at positions 43 and 49. The induces experimental autoimmune encephalomyelitis (EAE) stretch occupies residues 45–86 (FSSDRGAPKRGSGKDHAARTTHYGSLPQKSGHRPQDENPVVH). Serine 56 is subject to Phosphoserine. Threonine 65 carries the post-translational modification Phosphothreonine. The residue at position 67 (tyrosine 67) is a Phosphotyrosine. Position 74 is a phosphoserine (serine 74). A phosphothreonine mark is found at threonine 93 and threonine 96. Residue glutamine 101 is modified to Deamidated glutamine; partial. At arginine 105 the chain carries Omega-N-methylarginine; alternate. Arginine 105 carries the post-translational modification Symmetric dimethylarginine; alternate. Serine 113 bears the Phosphoserine mark. At lysine 120 the chain carries N6-acetyllysine. Position 128 is a citrulline (arginine 128). At glutamine 145 the chain carries Deamidated glutamine. Arginine 157 carries the citrulline modification. Serine 159 bears the Phosphoserine mark. Serine 163 is modified (phosphoserine; by UHMK1). The residue at position 168 (arginine 168) is a Citrulline.

It belongs to the myelin basic protein family. As to quaternary structure, homodimer. As in other animals, several charge isomers may be produced as a result of optional post-translational modifications, such as phosphorylation of serine or threonine residues, deamidation of glutamine or asparagine residues, citrullination and methylation of arginine residues. Post-translationally, phosphorylated by TAOK2, VRK2, MAPK11, MAPK12, MAPK14 and MINK1. In terms of processing, proteolytically cleaved in B cell lysosomes by cathepsin CTSG which degrades the major immunogenic MBP epitope and prevents the activation of MBP-specific autoreactive T cells. In terms of tissue distribution, found in both the central and the peripheral nervous system.

It localises to the myelin membrane. Is, with PLP, the most abundant protein component of the myelin membrane in the CNS. Has a role in both the formation and stabilization of this compact multilayer arrangement of bilayers. Each splice variant and charge isomer may have a specialized function in the assembly of an optimized, biochemically functional myelin membrane. The chain is Myelin basic protein (MBP) from Oryctolagus cuniculus (Rabbit).